A 407-amino-acid polypeptide reads, in one-letter code: Protein ZNF365 (407 aa).

Serine 16 carries the phosphoserine modification. The C2H2-type; degenerate zinc-finger motif lies at 26 to 51 (FRCPRCGDHTRFRSLSSLRAHLEFSH). Position 138 is a phosphoserine (serine 138). A coiled-coil region spans residues 169-296 (VEAVDRTIEK…KQLEYYQSQQ (128 aa)). Residue threonine 175 is modified to Phosphothreonine. The segment at 347–392 (LKKAKDDRASMQPAKAIHEQAESSRDLCRPPKKGELLGFGRKGNIR) is disordered. Basic and acidic residues predominate over residues 362-381 (AIHEQAESSRDLCRPPKKGE). At serine 369 the chain carries Phosphoserine.

Homodimers. Interacts with NDE1 and NDEL1. Interacts with DISC1. Interacts with PARP1. Interacts with MCRS1.

The protein localises to the cytoplasm. Its subcellular location is the cytoskeleton. The protein resides in the microtubule organizing center. It is found in the centrosome. Its function is as follows. Involved in the regulation of neurogenesis. Negatively regulates neurite outgrowth. Involved in the morphogenesis of basket cells in the somatosensory cortex during embryogenesis. Involved in the positive regulation of oligodendrocyte differentiation during postnatal growth. Involved in dendritic arborization, morphogenesis of spine density dendrite, and establishment of postsynaptic dendrite density in cortical pyramidal neurons. Involved in homologous recombination (HR) repair pathway. Required for proper resolution of DNA double-strand breaks (DSBs) by HR. Is required for recovery of stalled replication forks, and directly contributes to genomic stability. Interacts with PARP1 and mediates MRE11-dependent DNA end resection during replication fork recovery. Contributes to genomic stability by preventing telomere dysfunction. This is Protein ZNF365 (ZNF365) from Pongo abelii (Sumatran orangutan).